A 421-amino-acid polypeptide reads, in one-letter code: UV-B-induced protein At3g17800, chloroplastic (421 aa).

Disordered regions lie at residues 1-40 (MDAL…RSGS) and 74-95 (VRAS…IAPL). The N-terminal 75 residues, 1–75 (MDALTSSLVR…AKTRRSFVVR (75 aa)), are a transit peptide targeting the chloroplast. The segment covering 16 to 28 (SRTSDNGSGSMFL) has biased composition (polar residues). Over residues 74–88 (VRASSASNDASSGSS) the composition is skewed to low complexity.

The protein localises to the plastid. Its subcellular location is the chloroplast. The protein is UV-B-induced protein At3g17800, chloroplastic of Arabidopsis thaliana (Mouse-ear cress).